A 378-amino-acid chain; its full sequence is Galanin receptor 2b (378 aa).

Over 1-30 the chain is Extracellular; that stretch reads MSDHEDLNKAMGHWNASESYQLNPASVIVS. Residues 31-51 traverse the membrane as a helical segment; that stretch reads VVFSLIFLLGTIGNSLVLAVL. The Cytoplasmic portion of the chain corresponds to 52 to 62; that stretch reads LRSGQVGYNTT. Residues 63–83 form a helical membrane-spanning segment; sequence NLFILNLSVADFFFIIFCVPF. Residues 84–101 are Extracellular-facing; sequence QATIYSLEGWVFGSFMCK. A disulfide bond links Cys-100 and Cys-177. The chain crosses the membrane as a helical span at residues 102–123; the sequence is VVHFFINLTMYASSFTLAAVSV. Over 124 to 143 the chain is Cytoplasmic; sequence DRYLAIRYPLRSRELRTPCN. A helical membrane pass occupies residues 144-164; that stretch reads AVVAMVVIWGLSLVFAGPYLS. The Extracellular segment spans residues 165 to 187; it reads YYDLIDFENSNVCVPGWEEHNRK. A helical membrane pass occupies residues 188–208; sequence VLDTCTFVFGYVIPVLIVSLS. Over 209–238 the chain is Cytoplasmic; sequence YTRTIKYLWTAVDPLDGMSESKRAKRKVTK. A helical membrane pass occupies residues 239–259; that stretch reads MIIIVTVLFCICWLPYHVVIL. The Extracellular segment spans residues 260 to 276; the sequence is CYLYGDFPFNQTTYAFR. The chain crosses the membrane as a helical span at residues 277–297; sequence LLSHCMAYANSCLNPIVYALV. Topologically, residues 298–378 are cytoplasmic; sequence SKHFRKGFKK…TITLPFQNQP (81 aa). Positions 339 to 362 are disordered; sequence EVSQMNEENARQNESEMVNRPLAQ.

This sequence belongs to the G-protein coupled receptor 1 family. As to expression, expressed in neurons in the ventral area of the interpeduncular nucleus (IPN) where expression often overlaps with spx1.

The protein resides in the membrane. Its function is as follows. Receptor for the hormone galanin. Receptor for the hormones spexin-1 and spexin-2. This Danio rerio (Zebrafish) protein is Galanin receptor 2b.